We begin with the raw amino-acid sequence, 278 residues long: Extracellular metalloprotease GLRG_06511 (278 aa).

The first 19 residues, Met-1 to Ala-19, serve as a signal peptide directing secretion. N-linked (GlcNAc...) asparagine glycosylation is present at Asn-51. His-190 is a Zn(2+) binding site. Residue Glu-191 is part of the active site. His-194 contributes to the Zn(2+) binding site. Cys-227 and Cys-254 are joined by a disulfide.

Belongs to the peptidase M43B family.

The protein resides in the secreted. In terms of biological role, secreted metalloproteinase that allows assimilation of proteinaceous substrates. This is Extracellular metalloprotease GLRG_06511 from Colletotrichum graminicola (strain M1.001 / M2 / FGSC 10212) (Maize anthracnose fungus).